A 512-amino-acid polypeptide reads, in one-letter code: GMP synthase [glutamine-hydrolyzing] (512 aa).

The Glutamine amidotransferase type-1 domain occupies 7–197 (TIIVLDFGSQ…VFGVCGCSEG (191 aa)). Residue C84 is the Nucleophile of the active site. Catalysis depends on residues H171 and E173. Positions 198 to 387 (WNMENFIEVE…LGIPDEIVWR (190 aa)) constitute a GMPS ATP-PPase domain. Position 225-231 (225-231 (SGGVDSS)) interacts with ATP.

As to quaternary structure, homodimer.

It carries out the reaction XMP + L-glutamine + ATP + H2O = GMP + L-glutamate + AMP + diphosphate + 2 H(+). Its pathway is purine metabolism; GMP biosynthesis; GMP from XMP (L-Gln route): step 1/1. Catalyzes the synthesis of GMP from XMP. The chain is GMP synthase [glutamine-hydrolyzing] from Bacillus anthracis.